Here is a 500-residue protein sequence, read N- to C-terminus: Archaeal-type glutamate synthase [NADPH] (500 aa).

2 4Fe-4S ferredoxin-type domains span residues serine 7–aspartate 38 and aspartate 40–asparagine 69. 8 residues coordinate [4Fe-4S] cluster: cysteine 18, cysteine 21, cysteine 24, cysteine 28, cysteine 49, cysteine 52, cysteine 55, and cysteine 59.

It belongs to the glutamate synthase family. It depends on FMN as a cofactor.

The enzyme catalyses 2 L-glutamate + NADP(+) = L-glutamine + 2-oxoglutarate + NADPH + H(+). In Dehalococcoides mccartyi (strain ATCC BAA-2266 / KCTC 15142 / 195) (Dehalococcoides ethenogenes (strain 195)), this protein is Archaeal-type glutamate synthase [NADPH].